Consider the following 316-residue polypeptide: Pantothenate kinase (316 aa).

Residue 95–102 (GSVAVGKS) coordinates ATP.

The protein belongs to the prokaryotic pantothenate kinase family.

The protein resides in the cytoplasm. It catalyses the reaction (R)-pantothenate + ATP = (R)-4'-phosphopantothenate + ADP + H(+). It participates in cofactor biosynthesis; coenzyme A biosynthesis; CoA from (R)-pantothenate: step 1/5. The chain is Pantothenate kinase from Sodalis glossinidius (strain morsitans).